Reading from the N-terminus, the 225-residue chain is NAD(P)H-quinone oxidoreductase subunit K, chloroplastic (225 aa).

4 residues coordinate [4Fe-4S] cluster: C43, C44, C108, and C139.

It belongs to the complex I 20 kDa subunit family. NDH is composed of at least 16 different subunits, 5 of which are encoded in the nucleus. [4Fe-4S] cluster serves as cofactor.

Its subcellular location is the plastid. It is found in the chloroplast thylakoid membrane. The enzyme catalyses a plastoquinone + NADH + (n+1) H(+)(in) = a plastoquinol + NAD(+) + n H(+)(out). It carries out the reaction a plastoquinone + NADPH + (n+1) H(+)(in) = a plastoquinol + NADP(+) + n H(+)(out). Its function is as follows. NDH shuttles electrons from NAD(P)H:plastoquinone, via FMN and iron-sulfur (Fe-S) centers, to quinones in the photosynthetic chain and possibly in a chloroplast respiratory chain. The immediate electron acceptor for the enzyme in this species is believed to be plastoquinone. Couples the redox reaction to proton translocation, and thus conserves the redox energy in a proton gradient. This is NAD(P)H-quinone oxidoreductase subunit K, chloroplastic from Fagopyrum esculentum subsp. ancestrale (Wild buckwheat).